The primary structure comprises 159 residues: Large ribosomal subunit protein uL22 (159 aa).

The protein belongs to the universal ribosomal protein uL22 family. Part of the 50S ribosomal subunit.

Functionally, this protein binds specifically to 23S rRNA; its binding is stimulated by other ribosomal proteins, e.g. L4, L17, and L20. It is important during the early stages of 50S assembly. It makes multiple contacts with different domains of the 23S rRNA in the assembled 50S subunit and ribosome. In terms of biological role, the globular domain of the protein is located near the polypeptide exit tunnel on the outside of the subunit, while an extended beta-hairpin is found that lines the wall of the exit tunnel in the center of the 70S ribosome. This Thermotoga sp. (strain RQ2) protein is Large ribosomal subunit protein uL22.